The primary structure comprises 63 residues: Large ribosomal subunit protein uL30 (63 aa).

The protein belongs to the universal ribosomal protein uL30 family. In terms of assembly, part of the 50S ribosomal subunit.

In Granulibacter bethesdensis (strain ATCC BAA-1260 / CGDNIH1), this protein is Large ribosomal subunit protein uL30.